Consider the following 431-residue polypeptide: Na(+)-translocating NADH-quinone reductase subunit F (431 aa).

The chain crosses the membrane as a helical span at residues I10–L30. The 2Fe-2S ferredoxin-type domain occupies C41–Y133. Positions 76, 82, 85, and 117 each coordinate [2Fe-2S] cluster. An FAD-binding FR-type domain is found at A136–K286. The catalytic stretch occupies residues N289–L413.

It belongs to the NqrF family. Composed of six subunits; NqrA, NqrB, NqrC, NqrD, NqrE and NqrF. It depends on [2Fe-2S] cluster as a cofactor. The cofactor is FAD.

It localises to the cell inner membrane. It carries out the reaction a ubiquinone + n Na(+)(in) + NADH + H(+) = a ubiquinol + n Na(+)(out) + NAD(+). Its function is as follows. NQR complex catalyzes the reduction of ubiquinone-1 to ubiquinol by two successive reactions, coupled with the transport of Na(+) ions from the cytoplasm to the periplasm. The first step is catalyzed by NqrF, which accepts electrons from NADH and reduces ubiquinone-1 to ubisemiquinone by a one-electron transfer pathway. This Chlamydia muridarum (strain MoPn / Nigg) protein is Na(+)-translocating NADH-quinone reductase subunit F.